Reading from the N-terminus, the 442-residue chain is 3-phosphoshikimate 1-carboxyvinyltransferase (442 aa).

3-phosphoshikimate contacts are provided by Lys-25, Ser-26, and Arg-30. Lys-25 provides a ligand contact to phosphoenolpyruvate. Residues Gly-96 and Arg-124 each contribute to the phosphoenolpyruvate site. The 3-phosphoshikimate site is built by Ser-171, Ser-172, Gln-173, Ser-203, Asp-325, and Lys-352. Gln-173 is a binding site for phosphoenolpyruvate. Catalysis depends on Asp-325, which acts as the Proton acceptor. Phosphoenolpyruvate-binding residues include Arg-356, Arg-400, and Lys-425.

Belongs to the EPSP synthase family. Monomer.

It localises to the cytoplasm. It catalyses the reaction 3-phosphoshikimate + phosphoenolpyruvate = 5-O-(1-carboxyvinyl)-3-phosphoshikimate + phosphate. It functions in the pathway metabolic intermediate biosynthesis; chorismate biosynthesis; chorismate from D-erythrose 4-phosphate and phosphoenolpyruvate: step 6/7. Catalyzes the transfer of the enolpyruvyl moiety of phosphoenolpyruvate (PEP) to the 5-hydroxyl of shikimate-3-phosphate (S3P) to produce enolpyruvyl shikimate-3-phosphate and inorganic phosphate. This is 3-phosphoshikimate 1-carboxyvinyltransferase from Bordetella pertussis (strain Tohama I / ATCC BAA-589 / NCTC 13251).